A 348-amino-acid chain; its full sequence is MEKQRLKAQLSSLRVPLFSVPWPGQCSNKAEVIEARMMKWADEHNLLVTDEYRNRVIRTRYGLLAARCYPNAGEVLLQAIADYLVWFFLADDLFVDRVEVATDETIRNLTAMVDVLDLNVAGSPPVFGELAWLDVCQRLRRLLQAETFERFAQGMRLWATTAALQILNHLRPTSVGIREYQTIRRHTSGMNPCASLADAANKGSVQACEFYDADVQTLVRQTNNIVCWANDIQSLRIEIHQPGQFRNIVTIYAQQGQSLQDAVETTATRVNKEIAGFCELADAVTARPISDELHGLIDGLKYWIRGYLDWVVHDTMRYADQFIESDADDRRFSAPDLSLLKKKLLVCD.

Mg(2+) is bound by residues aspartate 91 and aspartate 96. The DDXXXD motif motif lies at 91-96; the sequence is DDLFVD. Arginine 184 is a binding site for substrate. Asparagine 230, serine 234, and glutamate 238 together coordinate Mg(2+).

The protein belongs to the terpene synthase family. Mg(2+) is required as a cofactor.

It carries out the reaction (2E,6E)-farnesyl diphosphate + H2O = (+)-corvol ether B + diphosphate. The enzyme catalyses (2E,6E)-farnesyl diphosphate + H2O = (+)-corvol ether A + diphosphate. In terms of biological role, terpene synthase that catalyzes the conversion of (2E,6E)-farnesyl diphosphate (FPP) into sesquiterpenes which are important for fungi-environment interactions. Produces a mixture consisting of 8 sesquiterpenes including corvol ethers A and B, as well as traces of epizonarene, gamma-cadinene, delta-cadinene, alpha-cadinene, alpha-cadinol, and an unidentified sesquiterpene. Produces both corvol ether A and corvol ether B in similar concentrations. This Metarhizium guizhouense (strain ARSEF 977) protein is Sesquiterpene synthase MGU_11447.